A 226-amino-acid polypeptide reads, in one-letter code: Phosphoglycolate phosphatase (226 aa).

Residue D9 is the Nucleophile of the active site. Residues D9 and D11 each coordinate Mg(2+). Position 150 (K150) interacts with substrate. Mg(2+)-binding residues include D173 and D177.

The protein belongs to the archaeal SPP-like hydrolase family. It depends on Mg(2+) as a cofactor.

It carries out the reaction 2-phosphoglycolate + H2O = glycolate + phosphate. Its function is as follows. Catalyzes the dephosphorylation of 2-phosphoglycolate. The polypeptide is Phosphoglycolate phosphatase (Methanococcoides burtonii (strain DSM 6242 / NBRC 107633 / OCM 468 / ACE-M)).